Reading from the N-terminus, the 444-residue chain is Trigger factor (444 aa).

The PPIase FKBP-type domain occupies 166–251 (GDQIVIDFKG…VKAVKAPKAA (86 aa)).

This sequence belongs to the FKBP-type PPIase family. Tig subfamily.

It localises to the cytoplasm. The enzyme catalyses [protein]-peptidylproline (omega=180) = [protein]-peptidylproline (omega=0). Its function is as follows. Involved in protein export. Acts as a chaperone by maintaining the newly synthesized protein in an open conformation. Functions as a peptidyl-prolyl cis-trans isomerase. This is Trigger factor from Paracoccus denitrificans (strain Pd 1222).